A 618-amino-acid chain; its full sequence is Two-component response regulator-like APRR1 (618 aa).

The 119-residue stretch at 20–138 (RILLCDNDST…ELLNLWTHMW (119 aa)) folds into the Response regulatory domain. Polar residues-rich tracts occupy residues 161 to 174 (SDQSDPNTNSTNLF), 187 to 200 (NPQRGNLSHQENEW), 246 to 257 (RNSNPAQFSSAP), 324 to 334 (PKSTVLRTNGQ), and 375 to 389 (TEQYHSQGETLQNGA). 5 disordered regions span residues 161–200 (SDQSDPNTNSTNLFSDDTDDRSLRSTNPQRGNLSHQENEW), 239–260 (SHHEPMKRNSNPAQFSSAPKKS), 316–338 (TKQARRATPKSTVLRTNGQDPPL), 368–395 (QAHRSRGTEQYHSQGETLQNGASYPHSL), and 573–618 (VRKM…ALGT). One can recognise a CCT domain in the interval 533–575 (REEALLKFRRKRNQRCFDKKIRYVNRKRLAERRPRVKGQFVRK). A coiled-coil region spans residues 588–610 (DSADYDDEEEEEEEEEEENRDSS). A compositionally biased stretch (acidic residues) spans 590–606 (ADYDDEEEEEEEEEEEN).

It belongs to the ARR-like family. Interacts with PIF1, PIL2, PIF3, PIF4, PIL5, PIL6, ABI3 (via C-terminus), ADO1/ZTL, ADO2, APRR3 and TCP21/CHE. Both the phosphorylated and the dephosphorylated forms interact with ADO1/ZLT. Phosphorylated; during the day. Phosphorylation is required for optimal interaction with APRR3. In terms of tissue distribution, expressed in leaves, flowers and siliques. Restricted to the vasculature.

It is found in the nucleus. In terms of biological role, controls photoperiodic flowering response. Component of the circadian clock. Expression of several members of the ARR-like family is controlled by circadian rhythm. The particular coordinated sequential expression of APRR9, APRR7, APRR5, APRR3 and APPR1 result to circadian waves that may be at the basis of the endogenous circadian clock. Positive regulator of CCA1 and LHY expression. The protein is Two-component response regulator-like APRR1 (APRR1) of Arabidopsis thaliana (Mouse-ear cress).